The primary structure comprises 354 residues: Magnesium-protoporphyrin IX monomethyl ester [oxidative] cyclase (354 aa).

The protein belongs to the AcsF family. It depends on Fe cation as a cofactor.

The protein resides in the plastid. It localises to the chloroplast. The enzyme catalyses Mg-protoporphyrin IX 13-monomethyl ester + 3 NADPH + 3 O2 + 2 H(+) = 3,8-divinyl protochlorophyllide a + 3 NADP(+) + 5 H2O. It participates in porphyrin-containing compound metabolism; chlorophyll biosynthesis (light-independent). Functionally, catalyzes the formation of the isocyclic ring in chlorophyll biosynthesis. Mediates the cyclase reaction, which results in the formation of divinylprotochlorophyllide (Pchlide) characteristic of all chlorophylls from magnesium-protoporphyrin IX 13-monomethyl ester (MgPMME). The protein is Magnesium-protoporphyrin IX monomethyl ester [oxidative] cyclase of Cyanidium caldarium (Red alga).